Reading from the N-terminus, the 431-residue chain is Adenylosuccinate synthetase (431 aa).

GTP contacts are provided by residues G12–K18 and G40–T42. Residue D13 is the Proton acceptor of the active site. Mg(2+) is bound by residues D13 and G40. IMP contacts are provided by residues D13 to K16, N38 to H41, T129, R143, Q224, and T239. The active-site Proton donor is the H41. K292 is covalently cross-linked (Isoglutamyl lysine isopeptide (Lys-Gln) (interchain with Q-Cter in protein Pup)). Position 299–305 (V299–R305) interacts with substrate. R303 is an IMP binding site. Residues R305, K331–D333, and G413–G415 contribute to the GTP site.

The protein belongs to the adenylosuccinate synthetase family. Homodimer. It depends on Mg(2+) as a cofactor.

It is found in the cytoplasm. The enzyme catalyses IMP + L-aspartate + GTP = N(6)-(1,2-dicarboxyethyl)-AMP + GDP + phosphate + 2 H(+). It functions in the pathway purine metabolism; AMP biosynthesis via de novo pathway; AMP from IMP: step 1/2. In terms of biological role, plays an important role in the de novo pathway of purine nucleotide biosynthesis. Catalyzes the first committed step in the biosynthesis of AMP from IMP. The protein is Adenylosuccinate synthetase of Mycolicibacterium smegmatis (strain ATCC 700084 / mc(2)155) (Mycobacterium smegmatis).